The chain runs to 278 residues: tRNA pseudouridine synthase A (278 aa).

Residue Asp52 is the Nucleophile of the active site. Tyr111 contacts substrate. A compositionally biased stretch (low complexity) spans 253–264 (AKAGPLEAAPLG). Residues 253–278 (AKAGPLEAAPLGEAPLKEATLKEDWR) are disordered. Basic and acidic residues predominate over residues 267–278 (PLKEATLKEDWR).

Belongs to the tRNA pseudouridine synthase TruA family. As to quaternary structure, homodimer.

The catalysed reaction is uridine(38/39/40) in tRNA = pseudouridine(38/39/40) in tRNA. Functionally, formation of pseudouridine at positions 38, 39 and 40 in the anticodon stem and loop of transfer RNAs. The chain is tRNA pseudouridine synthase A from Rhodospirillum rubrum (strain ATCC 11170 / ATH 1.1.1 / DSM 467 / LMG 4362 / NCIMB 8255 / S1).